The primary structure comprises 729 residues: Transketolase (729 aa).

H97 is a binding site for substrate. Residues H138 and 186-188 (GPL) contribute to the thiamine diphosphate site. D227 provides a ligand contact to Mg(2+). Thiamine diphosphate is bound by residues G228 and N257. Mg(2+)-binding residues include N257 and I259. Residues H332, R423, and S450 each coordinate substrate. Position 332 (H332) interacts with thiamine diphosphate. The active-site Proton donor is the E477. F503 serves as a coordination point for thiamine diphosphate. Positions 527, 535, and 586 each coordinate substrate.

The protein belongs to the transketolase family. Homodimer. Requires Mg(2+) as cofactor. Ca(2+) is required as a cofactor. The cofactor is Mn(2+). Co(2+) serves as cofactor. It depends on thiamine diphosphate as a cofactor.

It carries out the reaction D-sedoheptulose 7-phosphate + D-glyceraldehyde 3-phosphate = aldehydo-D-ribose 5-phosphate + D-xylulose 5-phosphate. In terms of biological role, catalyzes the transfer of a two-carbon ketol group from a ketose donor to an aldose acceptor, via a covalent intermediate with the cofactor thiamine pyrophosphate. The chain is Transketolase (tkt) from Streptococcus pyogenes serotype M18 (strain MGAS8232).